The primary structure comprises 855 residues: Photoactivated adenylate cyclase subunit beta-like protein 1224-5/9F (855 aa).

The region spanning 56 to 149 is the BLUF 1 domain; the sequence is LRRLMYLSKG…GRMSGVWHMK (94 aa). The disordered stretch occupies residues 420–444; that stretch reads RPPIFDDTPKCNPRPRTPGCEGRQR. The BLUF 2 domain maps to 471–563; the sequence is VPTLTYISHA…RVYPSEWTLT (93 aa). A compositionally biased stretch (basic and acidic residues) spans 813 to 827; that stretch reads RSGEKPLTEPEEAKL. The interval 813 to 855 is disordered; that stretch reads RSGEKPLTEPEEAKLDFSPGRVRHGDSGRRSNSAQGKLSIQVR. Polar residues predominate over residues 842 to 855; sequence RSNSAQGKLSIQVR.

As to quaternary structure, heterotetramer of two alpha and two beta subunits.

Its subcellular location is the cell projection. The protein localises to the cilium. It is found in the flagellum. The protein is Photoactivated adenylate cyclase subunit beta-like protein 1224-5/9F of Euglena gracilis.